Reading from the N-terminus, the 532-residue chain is MIARLAGRIILLNGWRRALAAFLSGAFATLTQPPFDIFVAGFVSFPVLVWLIDGAIARTDAGPLRRLLLAAKVGWWFGFGYFVSGLWWIGTALLVDADQFAWALPLAVLGLPAFLALFYAFAAMIARLLWSDGLGRILAFAFGFALAEWLRTFIFTGFPWNLIGYAAMPVPLLMQSVAVIGLVGMSALAVFVFAAPALLTGGHFARTGIGLAIFLALAHVGFGAWTLSRAPAIVDENGPLAVRIVQPSIAQAMKWDNAERRAIFDKLVGLTEEAPAEGKPRPDVIVWPETAIPYILESTPQALAHIGDALQEGQVLLAGAVREEKGADGGEPRYYNSIYTIDDRGRIVSTADKVHLVPFGEYLPFESFLRGLGLQEVVEMPGGFTAGTTRHALAVKDGRSFLPLICYEAIFPDELGYEGAGASAIINVTNDAWYGDTPGPYQHFRQAQVRAVEQGLPLIRAANNGLSAIVDTYGRITGSLALDAVGVVDSYLPSPRDPFWGRPPGWIQTVLILLTLLAASVGLILYSRRRFH.

A run of 6 helical transmembrane segments spans residues 37–57, 75–95, 106–126, 128–148, 179–199, and 207–227; these read IFVAGFVSFPVLVWLIDGAIA, WWFGFGYFVSGLWWIGTALLV, LAVLGLPAFLALFYAFAAMIA, LLWSDGLGRILAFAFGFALAE, VIGLVGMSALAVFVFAAPALL, and TGIGLAIFLALAHVGFGAWTL. In terms of domain architecture, CN hydrolase spans 245 to 494; that stretch reads VQPSIAQAMK…VGVVDSYLPS (250 aa). The active-site Proton acceptor is E289. K353 is an active-site residue. C406 acts as the Nucleophile in catalysis. The chain crosses the membrane as a helical span at residues 505 to 525; sequence GWIQTVLILLTLLAASVGLIL.

The protein belongs to the CN hydrolase family. Apolipoprotein N-acyltransferase subfamily.

It is found in the cell inner membrane. It carries out the reaction N-terminal S-1,2-diacyl-sn-glyceryl-L-cysteinyl-[lipoprotein] + a glycerophospholipid = N-acyl-S-1,2-diacyl-sn-glyceryl-L-cysteinyl-[lipoprotein] + a 2-acyl-sn-glycero-3-phospholipid + H(+). Its pathway is protein modification; lipoprotein biosynthesis (N-acyl transfer). Catalyzes the phospholipid dependent N-acylation of the N-terminal cysteine of apolipoprotein, the last step in lipoprotein maturation. This is Apolipoprotein N-acyltransferase from Brucella melitensis biotype 1 (strain ATCC 23456 / CCUG 17765 / NCTC 10094 / 16M).